Reading from the N-terminus, the 287-residue chain is Elongation factor Ts (287 aa).

The segment at 80–83 (TDFL) is involved in Mg(2+) ion dislocation from EF-Tu.

The protein belongs to the EF-Ts family.

It localises to the cytoplasm. Associates with the EF-Tu.GDP complex and induces the exchange of GDP to GTP. It remains bound to the aminoacyl-tRNA.EF-Tu.GTP complex up to the GTP hydrolysis stage on the ribosome. The polypeptide is Elongation factor Ts (Pseudomonas syringae pv. tomato (strain ATCC BAA-871 / DC3000)).